The chain runs to 264 residues: Thymidylate synthase (264 aa).

Arg-21 lines the dUMP pocket. Residue His-51 participates in (6R)-5,10-methylene-5,6,7,8-tetrahydrofolate binding. 126–127 (RR) provides a ligand contact to dUMP. Cys-146 functions as the Nucleophile in the catalytic mechanism. Residues 166–169 (RSCD), Asn-177, and 207–209 (HLY) each bind dUMP. Asp-169 serves as a coordination point for (6R)-5,10-methylene-5,6,7,8-tetrahydrofolate. Position 263 (Ala-263) interacts with (6R)-5,10-methylene-5,6,7,8-tetrahydrofolate.

The protein belongs to the thymidylate synthase family. Bacterial-type ThyA subfamily. As to quaternary structure, homodimer.

The protein resides in the cytoplasm. The enzyme catalyses dUMP + (6R)-5,10-methylene-5,6,7,8-tetrahydrofolate = 7,8-dihydrofolate + dTMP. It participates in pyrimidine metabolism; dTTP biosynthesis. Its function is as follows. Catalyzes the reductive methylation of 2'-deoxyuridine-5'-monophosphate (dUMP) to 2'-deoxythymidine-5'-monophosphate (dTMP) while utilizing 5,10-methylenetetrahydrofolate (mTHF) as the methyl donor and reductant in the reaction, yielding dihydrofolate (DHF) as a by-product. This enzymatic reaction provides an intracellular de novo source of dTMP, an essential precursor for DNA biosynthesis. This chain is Thymidylate synthase, found in Buchnera aphidicola subsp. Baizongia pistaciae (strain Bp).